A 624-amino-acid chain; its full sequence is tRNA uridine 5-carboxymethylaminomethyl modification enzyme MnmG (624 aa).

FAD-binding positions include 13–18, V125, and S180; that span reads GGGHAG. 273 to 287 lines the NAD(+) pocket; the sequence is GPRYCPSIEDKIVRF. Position 370 (Q370) interacts with FAD.

It belongs to the MnmG family. In terms of assembly, homodimer. Heterotetramer of two MnmE and two MnmG subunits. FAD is required as a cofactor.

The protein resides in the cytoplasm. In terms of biological role, NAD-binding protein involved in the addition of a carboxymethylaminomethyl (cmnm) group at the wobble position (U34) of certain tRNAs, forming tRNA-cmnm(5)s(2)U34. In Legionella pneumophila (strain Corby), this protein is tRNA uridine 5-carboxymethylaminomethyl modification enzyme MnmG.